The primary structure comprises 150 residues: Snaclec CTL-Eoc125 (150 aa).

The first 23 residues, 1 to 23, serve as a signal peptide directing secretion; it reads MGRFISVSFGLLVVFLSLSGIGA. Intrachain disulfides connect Cys27/Cys38, Cys55/Cys144, and Cys121/Cys136. A C-type lectin domain is found at 34-145; sequence YEGHCYKVFS…CSSTQQFICK (112 aa).

This sequence belongs to the snaclec family. Heterodimer; disulfide-linked. Expressed by the venom gland.

The protein localises to the secreted. Functionally, interferes with one step of hemostasis (modulation of platelet aggregation, or coagulation cascade, for example). The chain is Snaclec CTL-Eoc125 from Echis ocellatus (Ocellated saw-scaled viper).